Consider the following 450-residue polypeptide: tRNA-2-methylthio-N(6)-dimethylallyladenosine synthase (450 aa).

Positions 2–119 (KKVFVKTYGC…LPDLIARRQR (118 aa)) constitute an MTTase N-terminal domain. The [4Fe-4S] cluster site is built by Cys-11, Cys-48, Cys-82, Cys-156, Cys-160, and Cys-163. One can recognise a Radical SAM core domain in the interval 142–375 (RVEGPSAFVS…QATIEENVQR (234 aa)). The TRAM domain maps to 378–448 (QGMVGTVQRI…PHSLRGEIVV (71 aa)).

The protein belongs to the methylthiotransferase family. MiaB subfamily. Monomer. It depends on [4Fe-4S] cluster as a cofactor.

It is found in the cytoplasm. The catalysed reaction is N(6)-dimethylallyladenosine(37) in tRNA + (sulfur carrier)-SH + AH2 + 2 S-adenosyl-L-methionine = 2-methylsulfanyl-N(6)-dimethylallyladenosine(37) in tRNA + (sulfur carrier)-H + 5'-deoxyadenosine + L-methionine + A + S-adenosyl-L-homocysteine + 2 H(+). In terms of biological role, catalyzes the methylthiolation of N6-(dimethylallyl)adenosine (i(6)A), leading to the formation of 2-methylthio-N6-(dimethylallyl)adenosine (ms(2)i(6)A) at position 37 in tRNAs that read codons beginning with uridine. The protein is tRNA-2-methylthio-N(6)-dimethylallyladenosine synthase of Cupriavidus taiwanensis (strain DSM 17343 / BCRC 17206 / CCUG 44338 / CIP 107171 / LMG 19424 / R1) (Ralstonia taiwanensis (strain LMG 19424)).